The primary structure comprises 215 residues: Flavin-dependent thymidylate synthase (215 aa).

One can recognise a ThyX domain in the interval 1–215 (MDVRFISLTK…FPTVAAALEW (215 aa)). FAD contacts are provided by residues Ser56, 79 to 81 (RHR), and Glu87. DUMP contacts are provided by residues 76 to 79 (QILR), 87 to 91 (EFSLR), and Arg155. Residues 79 to 89 (RHRSFSFQEFS) carry the ThyX motif motif. His177 lines the FAD pocket. Arg182 provides a ligand contact to dUMP. The active-site Involved in ionization of N3 of dUMP, leading to its activation is Arg182.

It belongs to the thymidylate synthase ThyX family. Homotetramer. FAD is required as a cofactor.

It catalyses the reaction dUMP + (6R)-5,10-methylene-5,6,7,8-tetrahydrofolate + NADPH + H(+) = dTMP + (6S)-5,6,7,8-tetrahydrofolate + NADP(+). The protein operates within pyrimidine metabolism; dTTP biosynthesis. Functionally, catalyzes the reductive methylation of 2'-deoxyuridine-5'-monophosphate (dUMP) to 2'-deoxythymidine-5'-monophosphate (dTMP) while utilizing 5,10-methylenetetrahydrofolate (mTHF) as the methyl donor, and NADPH and FADH(2) as the reductant. The chain is Flavin-dependent thymidylate synthase from Synechocystis sp. (strain ATCC 27184 / PCC 6803 / Kazusa).